The primary structure comprises 112 residues: Colipase (112 aa).

The signal sequence occupies residues M1 to A17. Residues V18–R22 constitute a propeptide, enterostatin, activation peptide. 5 disulfide bridges follow: C34/C45, C40/C56, C44/C78, C66/C86, and C80/C104.

This sequence belongs to the colipase family. Forms a 1:1 stoichiometric complex with pancreatic lipase. As to expression, expressed by the pancreas.

It is found in the secreted. Its function is as follows. Colipase is a cofactor of pancreatic lipase. It allows the lipase to anchor itself to the lipid-water interface. Without colipase the enzyme is washed off by bile salts, which have an inhibitory effect on the lipase. Functionally, enterostatin has a biological activity as a satiety signal. The chain is Colipase (CLPS) from Canis lupus familiaris (Dog).